An 875-amino-acid polypeptide reads, in one-letter code: Neurotrypsin (875 aa).

Positions 1 to 20 are cleaved as a signal peptide; the sequence is MTLARFVLALVLGALPEVVG. N-linked (GlcNAc...) asparagine glycosylation occurs at Asn-26. The disordered stretch occupies residues 29–68; that stretch reads LHHRHRHSPPPGPQYPYYLPTHQRPPRTRPPPPLPRFSRP. Residues 93–165 enclose the Kringle domain; the sequence is CPPGEPWVSV…GKVDWGYCDC (73 aa). Disulfide bonds link Cys-93/Cys-165, Cys-109/Cys-149, Cys-138/Cys-163, Cys-195/Cys-259, Cys-208/Cys-269, Cys-239/Cys-249, Cys-305/Cys-369, Cys-318/Cys-379, Cys-349/Cys-359, Cys-412/Cys-475, Cys-425/Cys-485, Cys-455/Cys-465, Cys-525/Cys-589, Cys-538/Cys-599, Cys-569/Cys-579, Cys-619/Cys-750, Cys-661/Cys-677, Cys-765/Cys-831, Cys-794/Cys-808, and Cys-821/Cys-850. SRCR domains follow at residues 170–271, 280–381, 387–487, and 500–601; these read VRLR…TCSF, IRLV…SCTP, IRLA…ACYP, and VRLM…ICDY. Residues 619–630 form a zymogen activation region region; sequence CGLRLLHRRQKR. Residues 631–874 enclose the Peptidase S1 domain; the sequence is IIGGKNSLRG…FVPWIKSVTK (244 aa). Catalysis depends on His-676, which acts as the Charge relay system. The N-linked (GlcNAc...) asparagine glycan is linked to Asn-683. Catalysis depends on Asp-726, which acts as the Charge relay system. Ser-825 acts as the Charge relay system in catalysis.

The protein belongs to the peptidase S1 family.

The protein resides in the secreted. Plays a role in neuronal plasticity and the proteolytic action may subserve structural reorganizations associated with learning and memory operations. In Trachypithecus phayrei (Phayre's leaf monkey), this protein is Neurotrypsin (PRSS12).